The sequence spans 686 residues: DNA gyrase subunit B (686 aa).

The segment covering 1-27 (MADSGNPNENNPSTDTGVNDAVSTSHG) has biased composition (polar residues). The segment at 1–29 (MADSGNPNENNPSTDTGVNDAVSTSHGDA) is disordered. In terms of domain architecture, Toprim spans 465-579 (CEIFIVEGDS…SGHVYLSRPP (115 aa)). Residues E471, D544, and D546 each coordinate Mg(2+).

This sequence belongs to the type II topoisomerase GyrB family. As to quaternary structure, heterotetramer, composed of two GyrA and two GyrB chains. In the heterotetramer, GyrA contains the active site tyrosine that forms a transient covalent intermediate with DNA, while GyrB binds cofactors and catalyzes ATP hydrolysis. The cofactor is Mg(2+). It depends on Mn(2+) as a cofactor. Ca(2+) is required as a cofactor.

It is found in the cytoplasm. It catalyses the reaction ATP-dependent breakage, passage and rejoining of double-stranded DNA.. In terms of biological role, a type II topoisomerase that negatively supercoils closed circular double-stranded (ds) DNA in an ATP-dependent manner to modulate DNA topology and maintain chromosomes in an underwound state. Negative supercoiling favors strand separation, and DNA replication, transcription, recombination and repair, all of which involve strand separation. Also able to catalyze the interconversion of other topological isomers of dsDNA rings, including catenanes and knotted rings. Type II topoisomerases break and join 2 DNA strands simultaneously in an ATP-dependent manner. This chain is DNA gyrase subunit B, found in Streptomyces coelicolor (strain ATCC BAA-471 / A3(2) / M145).